Consider the following 630-residue polypeptide: Chaperone protein HtpG (630 aa).

Residues 1 to 338 are a; substrate-binding; sequence MTVEANKETL…SNDLSLNVSR (338 aa). Positions 339-555 are b; it reads EILQNDSTVE…QFDMGAQMKK (217 aa). The tract at residues 556–630 is c; it reads IMEAAGQKVP…LNRLLLELAN (75 aa).

The protein belongs to the heat shock protein 90 family. In terms of assembly, homodimer.

It is found in the cytoplasm. Molecular chaperone. Has ATPase activity. This is Chaperone protein HtpG from Marinobacter nauticus (strain ATCC 700491 / DSM 11845 / VT8) (Marinobacter aquaeolei).